The primary structure comprises 398 residues: 2-epi-5-epi-valiolone synthase (398 aa).

NAD(+) contacts are provided by residues D62, 93 to 96, 126 to 130, 150 to 151, K163, K172, and 190 to 193; these read ETVK, GVLMD, TT, and FLAT. The active site involves K163. 3 residues coordinate a divalent metal cation: E205, H276, and H292.

It belongs to the sugar phosphate cyclases superfamily. EEVS family. Requires NAD(+) as cofactor. Co(2+) serves as cofactor.

It carries out the reaction D-sedoheptulose 7-phosphate = 2-epi-5-epi-valiolone + phosphate. Functionally, catalyzes the cyclization of D-sedoheptulose 7-phosphate to 2-epi-5-epi-valiolone. Does not use ido-heptulose 7-phosphate and 3-deoxy-arabino-heptulosonate 7-phosphate. Involved in the biosynthesis of the acarviose moiety of the alpha-glucosidase inhibitor acarbose. This is 2-epi-5-epi-valiolone synthase from Actinoplanes sp. (strain ATCC 31044 / CBS 674.73 / SE50/110).